We begin with the raw amino-acid sequence, 322 residues long: tRNA-dihydrouridine synthase B (322 aa).

FMN is bound by residues Pro-16–Ala-18 and Gln-70. Residue Cys-100 is the Proton donor of the active site. FMN-binding positions include Lys-139, Asn-200–Asp-202, and Gly-224–Arg-225.

Belongs to the Dus family. DusB subfamily. The cofactor is FMN.

The catalysed reaction is a 5,6-dihydrouridine in tRNA + NAD(+) = a uridine in tRNA + NADH + H(+). It catalyses the reaction a 5,6-dihydrouridine in tRNA + NADP(+) = a uridine in tRNA + NADPH + H(+). Catalyzes the synthesis of 5,6-dihydrouridine (D), a modified base found in the D-loop of most tRNAs, via the reduction of the C5-C6 double bond in target uridines. The sequence is that of tRNA-dihydrouridine synthase B from Vibrio parahaemolyticus serotype O3:K6 (strain RIMD 2210633).